The sequence spans 461 residues: tRNA modification GTPase MnmE (461 aa).

3 residues coordinate (6S)-5-formyl-5,6,7,8-tetrahydrofolate: Arg-22, Glu-87, and Arg-126. The TrmE-type G domain occupies 222-382 (GITAVIAGKP…LENKLYEILI (161 aa)). A K(+)-binding site is contributed by Asn-232. GTP is bound by residues 232 to 237 (NVGKSS), 251 to 257 (TDIPGTT), 276 to 279 (DTAG), and 363 to 365 (SAR). Ser-236 provides a ligand contact to Mg(2+). Thr-251, Ile-253, and Thr-256 together coordinate K(+). Thr-257 provides a ligand contact to Mg(2+). Residue Lys-461 coordinates (6S)-5-formyl-5,6,7,8-tetrahydrofolate.

This sequence belongs to the TRAFAC class TrmE-Era-EngA-EngB-Septin-like GTPase superfamily. TrmE GTPase family. In terms of assembly, homodimer. Heterotetramer of two MnmE and two MnmG subunits. The cofactor is K(+).

It is found in the cytoplasm. Its function is as follows. Exhibits a very high intrinsic GTPase hydrolysis rate. Involved in the addition of a carboxymethylaminomethyl (cmnm) group at the wobble position (U34) of certain tRNAs, forming tRNA-cmnm(5)s(2)U34. This Carboxydothermus hydrogenoformans (strain ATCC BAA-161 / DSM 6008 / Z-2901) protein is tRNA modification GTPase MnmE.